The primary structure comprises 432 residues: Negative regulator of systemic acquired resistance SNI1 (432 aa).

Interacts with SSN2. Binds to NTL9/CBNAC to promote its binding to promoters of target genes. Component of the SMC5-SMC6 complex which consists at least of SMC5 and SMC6B. Interacts with RAD17. As to expression, expressed at low levels in the veins.

It is found in the nucleus. Component of the SMC5-SMC6 complex, a complex involved in repair of DNA double-strand breaks by homologous recombination. Transcription repressor that prevents expression of pathogenesis-related genes (PR) via histone modifications and binding negative cis-acting elements at their promoters. Negative regulator of hypersensitive response (HR) and systemic acquired resistance (SAR) required to dampen the basal expression of pathogenesis related (PR) genes. Functions synergistically with NTL9/CBNAC as negative regulator of pathogen-induced PR1 expression and basal resistance to a virulent strain of P.syringae. Binds to the PR1 gene promoter to suppress defense response in the absence of pathogen challenge and is removed in response to induction. Negatively regulates both gene expression and DNA recombination during pathogen infection, thus being involved in short-term defense response and a long-term survival strategy. Prevents effective immune responses that involve activation of DNA damage responses, probably by negatively regulating the DNA damage sensors RAD17 and ATR. Negative regulator of defenses against the beet cyst nematode H.schachtii. This chain is Negative regulator of systemic acquired resistance SNI1, found in Arabidopsis thaliana (Mouse-ear cress).